Consider the following 524-residue polypeptide: MLRLTVKHGLRANSQLAATRNPDASSYVQQLESEWEGAKPFTELPGPTRWQLFRGFQKGGEYHQLGMDDVMRLYKKQFGDICLIPGLFGMPSTVFTFNVETFEKVYRTEGQWPVRGGAEPVIHYRNKRKDEFFKNCMGLFGNGAEWGKNRSAVNPVLMQHRNVAIYLKPMQRVNRQFVNRIREIRDKESQEVPGDFMNTINHLTFESVATVALDRELGLLREANPPPEASKLFKNIEVLMDSFFDLGVRPSLYRYIPTPTYKKFSRAMDEIFDTCSMYVNQAIERIDRKSSQGDSNDHKSVLEQLLQIDRKLAVVMAMDMLMGGVDTTSTAISGILLNLAKNPEKQQRLREEVLSKLTSLHSEFTVEDMKSLPYLRAVIKESLRLYPVTFGNARSAGADVVLDGYRIPKGTKLLMTNSFLLKDDRLYPRAKEFIPERWLRRKDDDKSDVLMNKDLNAFIYLPFGFGPRMCVGKRIVDLEMELTVANLVRNFHIEYNYSTEKPYKCRFLYKPNIPLKFKFTDLKY.

Heme is bound at residue Cys470.

It belongs to the cytochrome P450 family. The cofactor is heme.

The protein localises to the mitochondrion membrane. The chain is Probable cytochrome P450 12c1, mitochondrial (Cyp12c1) from Drosophila melanogaster (Fruit fly).